The following is a 492-amino-acid chain: 2,3-bisphosphoglycerate-independent phosphoglycerate mutase (492 aa).

Positions 11 and 61 each coordinate Mn(2+). The active-site Phosphoserine intermediate is serine 61. Substrate-binding positions include histidine 118, 147–148 (RD), arginine 178, arginine 184, 248–251 (RNDR), and lysine 320. Residues aspartate 386, histidine 390, aspartate 427, histidine 428, and histidine 445 each contribute to the Mn(2+) site.

This sequence belongs to the BPG-independent phosphoglycerate mutase family. In terms of assembly, monomer. Mn(2+) is required as a cofactor.

The catalysed reaction is (2R)-2-phosphoglycerate = (2R)-3-phosphoglycerate. It participates in carbohydrate degradation; glycolysis; pyruvate from D-glyceraldehyde 3-phosphate: step 3/5. Its function is as follows. Catalyzes the interconversion of 2-phosphoglycerate and 3-phosphoglycerate. The protein is 2,3-bisphosphoglycerate-independent phosphoglycerate mutase of Campylobacter jejuni (strain RM1221).